The following is a 351-amino-acid chain: MDAFRRQASKLRDQVAKQQLAVIKQFSGTGYESSDVMVIDELEMQRHHQLDKLYRSTRSAKEFQRDIVKAAEAFTTIGLRHIEAGTKLSEDCCRYGNENSQNIDENILAKAAAIYGDARKHVDKEQEDFNKLLASQVLDPLRAMVAGSPLEDARHLAQRYSRMRQEAETHATEVSRRQARVREAPIPENVAKLQLAEAKMQELKANMAVLGKEATAALAAVESQQHRLTFQRLVAMVEGEKNYHLRIAAILSDIEAEMVTEKQHKESAPPAIPTENGSEKTSYFLAEVIHPFSAASEKELDLDKGDYIVVRKVSQTGWAEGECKGKAGWFPMAYIEKRQRLPTTNFAAEVY.

Coiled-coil stretches lie at residues 1–21 (MDAF…QQLA) and 193–213 (LQLA…LGKE). The 237-residue stretch at 31-267 (YESSDVMVID…MVTEKQHKES (237 aa)) folds into the BAR domain. Positions 281-340 (TSYFLAEVIHPFSAASEKELDLDKGDYIVVRKVSQTGWAEGECKGKAGWFPMAYIEKRQR) constitute an SH3 domain.

Interacts with FREE1. Interacts (via SH3 domain) with DRP2A/ADL6. Binds to SH3P2. As to expression, detected in all tissues except seedlings.

The protein localises to the cytoplasmic vesicle. The protein resides in the clathrin-coated vesicle. Its function is as follows. May be involved in the recruitment of DRP2A to the accessory protein complex and in the negative regulation of its GTPase activity. The polypeptide is SH3 domain-containing protein 3 (Arabidopsis thaliana (Mouse-ear cress)).